The chain runs to 190 residues: GTP cyclohydrolase 1 (190 aa).

Cys-75, His-78, and Cys-146 together coordinate Zn(2+).

It belongs to the GTP cyclohydrolase I family. As to quaternary structure, homomer.

It carries out the reaction GTP + H2O = 7,8-dihydroneopterin 3'-triphosphate + formate + H(+). Its pathway is cofactor biosynthesis; 7,8-dihydroneopterin triphosphate biosynthesis; 7,8-dihydroneopterin triphosphate from GTP: step 1/1. The chain is GTP cyclohydrolase 1 from Campylobacter concisus (strain 13826).